The following is a 407-amino-acid chain: Tryptophan synthase beta chain (407 aa).

At lysine 91 the chain carries N6-(pyridoxal phosphate)lysine.

It belongs to the TrpB family. In terms of assembly, tetramer of two alpha and two beta chains. Pyridoxal 5'-phosphate serves as cofactor.

It carries out the reaction (1S,2R)-1-C-(indol-3-yl)glycerol 3-phosphate + L-serine = D-glyceraldehyde 3-phosphate + L-tryptophan + H2O. It participates in amino-acid biosynthesis; L-tryptophan biosynthesis; L-tryptophan from chorismate: step 5/5. Its function is as follows. The beta subunit is responsible for the synthesis of L-tryptophan from indole and L-serine. This chain is Tryptophan synthase beta chain, found in Streptococcus pneumoniae (strain 70585).